The following is a 717-amino-acid chain: MGDLPPYPERPAQQPPGRRTSQASQRRHSRDQAQALAADPEERQQIPPDAQRNAPGWSQRGSLSQQENLLMPQVFQAEEARLGGMEYPSVNTGFPSEFQPQPYSDESRMQVAELTTSLMLQRLQQGQSSLFQQLDPTFQEPPVNPLGQFNLYQTDQFSEGAQHGPYIRDDPALQFLPSELGFPHYSAQVPEPEPLELAVQNAKAYLLQTSINCDLSLYEHLVNLLTKILNQRPEDPLSVLESLNRTTQWEWFHPKLDTLRDDPEMQPTYKMAEKQKALFTRSGGGTEGEQEMEEEVGETPVPNIMETAFYFEQAGVGLSSDESFRIFLAMKQLVEQQPIHTCRFWGKILGIKRSYLVAEVEFREGEEEAEEEEVEEMTEGGEVMEAHGEEEGEEDEEKAVDIVPKSVWKPPPVIPKEESRSGANKYLYFVCNEPGLPWTRLPHVTPAQIVNARKIKKFFTGYLDTPVVSYPPFPGNEANYLRAQIARISAATQVSPLGFYQFSEEEGDEEEEGGAGRDSYEENPDFEGIPVLELVDSMANWVHHTQHILPQGRCTWVNPLQKTEEEEDLGEEEEKADEGPEEVEQEVGPPLLTPLSEDAEIMHLAPWTTRLSCSLCPQYSVAVVRSNLWPGAYAYASGKKFENIYIGWGHKYSPESFNPALPAPIQQEYPSGPEIMEMSDPTVEEEQALKAAQEQALGATEEEEEGEEEEEGEETDD.

Disordered regions lie at residues 1-65, 503-523, 563-588, and 672-717; these read MGDL…SLSQ, SEEE…YEEN, TEEE…QEVG, and GPEI…ETDD. Acidic residues-rich tracts occupy residues 503 to 513, 564 to 585, and 700 to 717; these read SEEEGDEEEEG, EEEE…EVEQ, and TEEE…ETDD.

It belongs to the flagellar radial spoke RSP4/6 family. As to quaternary structure, component of the axonemal radial spoke 1 (RS1) and 2 (RS2) complexes, at least composed of spoke head proteins RSPH1, RSPH3, RSPH9 and the cilia-specific component RSPH4A or sperm-specific component RSPH6A, spoke stalk proteins RSPH14, DNAJB13, DYDC1, ROPN1L and NME5, and the RS1 complex-specific anchor protein IQUB. Interacts with RSPH1. Interacts with RSPH3B. Interacts with RSPH4A. Interacts with RSPH9. Interacts with RSPH10B. Phosphorylated by PKA. Phosphorylation increases in capacitated sperm.

It is found in the cytoplasm. Its subcellular location is the cytoskeleton. It localises to the flagellum axoneme. In terms of biological role, functions as part of radial spoke complexes in the axoneme of sperm flagella that play an important part in motility. The triple radial spokes (RS1, RS2 and RS3) are required to modulate beating of the sperm flagellum. The chain is Radial spoke head protein 6 homolog A from Homo sapiens (Human).